Consider the following 300-residue polypeptide: Zinc finger CCCH domain-containing protein 14 (300 aa).

The tract at residues 1–38 is disordered; that stretch reads MEVGGRKRGKPDGANGAGGKRARESESFQTGVGSKSKP. 2 C3H1-type zinc fingers span residues 33–61 and 99–127; these read GSKS…HHFP and TVKT…HGER. The KH domain occupies 170 to 234; the sequence is SATAKISVDA…DQIKNASAMV (65 aa). Residues 243-262 form a disordered region; the sequence is GGAPPQGKKPVGGSHRGGGP. A C3H1-type 3 zinc finger spans residues 265–292; the sequence is NFKTKLCENFTKGSCTFGDRCHFAHGEN.

The polypeptide is Zinc finger CCCH domain-containing protein 14 (Oryza sativa subsp. japonica (Rice)).